The sequence spans 86 residues: MNYFILLVVVCLLTAGTEGKKDGYPVEYDNCAYICWNYDNAYCDKLCKDKKADSGYCYWVHILCYCYGLPDSEPTKTNGKCKSGKK.

Residues 1 to 19 (MNYFILLVVVCLLTAGTEG) form the signal peptide. Residues 21–82 (KDGYPVEYDN…EPTKTNGKCK (62 aa)) enclose the LCN-type CS-alpha/beta domain. Disulfide bonds link C31-C81, C35-C57, C43-C64, and C47-C66. The residue at position 83 (S83) is a Serine amide.

Expressed by the venom gland.

The protein localises to the secreted. In terms of biological role, alpha toxins bind voltage-independently at site-3 of sodium channels (Nav) and inhibit the inactivation of the activated channels, thereby blocking neuronal transmission. This synthetic toxin inhibits inactivation of rat Nav1.4/SCN4A (when tested at 201 nM). In addition, it has been shown to cause a persistent sodium channel activation in nitrergic inhibitory fibers innervating the rabbit corpus cavernosum, resulting in NO release and cavernosal smooth muscle relaxation. This toxin is active against mammals. This synthetic peptide with a Ser at position 31 (C12S) acts as a bradykinin-potentiating peptide (BPP). Induces endothelium-dependent vasodilation that is reverted by NO synthase inhibitor, suggesting it activates molecular targets on vascular endothelium leading to NO production and vasodilation. It appears to induce vasodilation through muscarinic acetylcholine receptors (AChR) M2 (CHRM2) and M3 (CHRM3). Does not inhibit the angiotensin-converting enzyme (ACE). Does not act via bradykinin B2 receptor. The sequence is that of Alpha-mammal toxin Ts3 from Tityus serrulatus (Brazilian scorpion).